The following is a 322-amino-acid chain: NADH-quinone oxidoreductase subunit H (322 aa).

8 consecutive transmembrane segments (helical) span residues 12–32 (IGKA…MSFI), 79–99 (IFVL…AVVP), 111–131 (VGLL…LFAG), 151–171 (LSYE…TGSF), 183–203 (LWNV…GVAV), 234–254 (FFVG…TLFF), 262–282 (LPPF…FILL), and 301–321 (VCLP…LMNA).

This sequence belongs to the complex I subunit 1 family. In terms of assembly, NDH-1 is composed of 14 different subunits. Subunits NuoA, H, J, K, L, M, N constitute the membrane sector of the complex.

The protein resides in the cell inner membrane. The catalysed reaction is a quinone + NADH + 5 H(+)(in) = a quinol + NAD(+) + 4 H(+)(out). Functionally, NDH-1 shuttles electrons from NADH, via FMN and iron-sulfur (Fe-S) centers, to quinones in the respiratory chain. The immediate electron acceptor for the enzyme in this species is believed to be ubiquinone. Couples the redox reaction to proton translocation (for every two electrons transferred, four hydrogen ions are translocated across the cytoplasmic membrane), and thus conserves the redox energy in a proton gradient. This subunit may bind ubiquinone. This is NADH-quinone oxidoreductase subunit H from Aeromonas hydrophila subsp. hydrophila (strain ATCC 7966 / DSM 30187 / BCRC 13018 / CCUG 14551 / JCM 1027 / KCTC 2358 / NCIMB 9240 / NCTC 8049).